Reading from the N-terminus, the 541-residue chain is Protein wntless homolog A (541 aa).

The signal sequence occupies residues 1–28 (MAGAIIENMSTKKLCMVGVALLLLQVLA). Residues 29–232 (FLVGGLIAPK…SIFQNGGFTM (204 aa)) are Lumenal-facing. The chain crosses the membrane as a helical span at residues 233 to 253 (VWFAMKTFLTPSIIIIMIWYW). At 254–268 (RRITMMTRSPVLLEK) the chain is on the cytoplasmic side. The helical transmembrane segment at 269-289 (VIFALGFSMTFINIPVEWFSI) threads the bilayer. Residues 290–303 (GYDWTWMLLFGDIR) are Lumenal-facing. Residues 304 to 324 (QGIFYAMLLSFWIIFCGEHMM) traverse the membrane as a helical segment. Residues 325 to 331 (DQTERNR) are Cytoplasmic-facing. A helical transmembrane segment spans residues 332-352 (ISVYWKQVGPIAFGSCCLFIF). The Lumenal portion of the chain corresponds to 353–379 (DMCERGVQLKNPFYSIWTTDVGAEIAM). A helical membrane pass occupies residues 380 to 400 (AFIIVAGICACLYFLFLCFMV). The Cytoplasmic portion of the chain corresponds to 401 to 431 (YQVFRNISGKQSNLPAMTKARRLHYEGLIFR). A helical transmembrane segment spans residues 432–452 (FKFLMIITLACAALTIVFFIT). At 453–471 (TQITEGNWKLGDLSIELNS) the chain is on the lumenal side. Residues 472-492 (AFFTGVYGMWNLYVFALMFLY) form a helical membrane-spanning segment. Residues 493–541 (APSHKHYGDGQSNDGAGMSSGEELQLTTTITHIDGPTEVYRLAGKEAQE) lie on the Cytoplasmic side of the membrane.

This sequence belongs to the wntless family.

The protein localises to the golgi apparatus membrane. It localises to the cytoplasmic vesicle membrane. Functionally, required for a subset of Wnt-dependent developmental processes, in particular, eye and pronephros development. Regulates the secretion of wnt4, which is required for eye development. This Xenopus laevis (African clawed frog) protein is Protein wntless homolog A (wls-a).